The sequence spans 488 residues: MTDNDYPFDMLSQLSRLSQMSGIEDIIIETQPQESISDLNMIDSEAASVASVTNDRTLMRRCIVTLFFNDTAENLADWALDPASYFNEPEKDIKEWVGQFELCPTTNHLHAHIHVHFARQMRFQFIRDQFSAVSQIKLGDIKKGRGTSKHAVQCAVNYCIDPRKRHPEEPFNEAYLWPGNKTKWEFDQACADKQTKKKPTKEQLVKDKIALVDSFPYHWTWDQIVHSSDEAKELFFGCSASERYHKTRAVVQARRVIESVEIHYGAGGTGKSTFARQLGTKLGETSGRDEKYTRNYDDGNFWGGGITKYAGEAVVHLEEFEGQETLSKFKDICELGASGPNVNVKNGGTTLNHSHVVITSNTHPAGFYKGVWKGDPKQFAPFWRRITKLVFYPAHLPDGSLNAPKCDEDVYSIDQTEEWKALQGNYEGCLKMAERDWALRDDDLDSNKRPFDDAFSEGFVLPRPRQMQRSATEHNLFQYARSGRDPTS.

The interval proline 462–serine 488 is disordered.

It localises to the host nucleus. Functionally, plays an essential for the replication of viral DNA. Presumably cleaves viral genomic dsRNA replicative form to initiate rolling circle replication. This is Replication-associated protein from Chaetoceros diatodnavirus 1 (Chaetoceros setoense DNA virus).